Here is a 611-residue protein sequence, read N- to C-terminus: Aspartate--tRNA(Asp/Asn) ligase (611 aa).

Glu174 is a binding site for L-aspartate. The tract at residues 198–201 (QLFK) is aspartate. Position 220 (Arg220) interacts with L-aspartate. ATP-binding positions include 220 to 222 (RDE) and Gln229. His467 contacts L-aspartate. Glu501 is an ATP binding site. Arg508 contributes to the L-aspartate binding site. 553–556 (GLDR) is a binding site for ATP.

The protein belongs to the class-II aminoacyl-tRNA synthetase family. Type 1 subfamily. In terms of assembly, homodimer.

Its subcellular location is the cytoplasm. It catalyses the reaction tRNA(Asx) + L-aspartate + ATP = L-aspartyl-tRNA(Asx) + AMP + diphosphate. Functionally, aspartyl-tRNA synthetase with relaxed tRNA specificity since it is able to aspartylate not only its cognate tRNA(Asp) but also tRNA(Asn). Reaction proceeds in two steps: L-aspartate is first activated by ATP to form Asp-AMP and then transferred to the acceptor end of tRNA(Asp/Asn). The sequence is that of Aspartate--tRNA(Asp/Asn) ligase from Albidiferax ferrireducens (strain ATCC BAA-621 / DSM 15236 / T118) (Rhodoferax ferrireducens).